A 41-amino-acid polypeptide reads, in one-letter code: ORF3c protein (41 aa).

May play a role in host modulation. The polypeptide is ORF3c protein (Severe acute respiratory syndrome coronavirus 2 (2019-nCoV)).